We begin with the raw amino-acid sequence, 405 residues long: Type III polyketide synthase 10 (405 aa).

The span at methionine 1 to alanine 18 shows a compositional bias: polar residues. A disordered region spans residues methionine 1–asparagine 20. Cysteine 170 serves as the catalytic Nucleophile.

Belongs to the thiolase-like superfamily. Chalcone/stilbene synthases family. As to quaternary structure, interacts with STS1. As to expression, expressed in adult flowers.

Its subcellular location is the endoplasmic reticulum. In terms of biological role, plant type III polyketide synthases (PKSs) that catalyzes the condensation of fatty acyl-CoA with malonyl-CoA to generate triketide and tetraketide alpha-pyrones, the main components of pollen exine and potential sporopollenin precursors. May be involved in the synthesis of sporopollenin precursors in tapetal cells to regulate pollen wall formation. Required for exine and Ubisch body formation in anthers. Does not possess chalcone synthase (CHS) activity in vitro with the substrates 4-coumaroyl-CoA and malonyl-CoA. In Oryza sativa subsp. japonica (Rice), this protein is Type III polyketide synthase 10.